Consider the following 185-residue polypeptide: Flavodoxin (185 aa).

The Flavodoxin-like domain maps to 4 to 159 (VLVIYDTRTG…ACRRLGRRLA (156 aa)).

Belongs to the flavodoxin family. The cofactor is FMN.

In terms of biological role, low-potential electron donor to a number of redox enzymes. The chain is Flavodoxin (fldA) from Aquifex aeolicus (strain VF5).